A 488-amino-acid chain; its full sequence is Glutamyl-tRNA(Gln) amidotransferase subunit B, mitochondrial (488 aa).

The protein belongs to the GatB/GatE family. GatB subfamily. As to quaternary structure, subunit of the heterotrimeric GatFAB amidotransferase (AdT) complex, composed of A, B and F subunits.

Its subcellular location is the mitochondrion. The catalysed reaction is L-glutamyl-tRNA(Gln) + L-glutamine + ATP + H2O = L-glutaminyl-tRNA(Gln) + L-glutamate + ADP + phosphate + H(+). Allows the formation of correctly charged Gln-tRNA(Gln) through the transamidation of misacylated Glu-tRNA(Gln) in the mitochondria. The reaction takes place in the presence of glutamine and ATP through an activated gamma-phospho-Glu-tRNA(Gln). The protein is Glutamyl-tRNA(Gln) amidotransferase subunit B, mitochondrial of Candida albicans (strain WO-1) (Yeast).